Reading from the N-terminus, the 376-residue chain is MEENSIKIHKWLYPASWLYGAGVALRNKLFDWGKLQSKSFNVPIICIGNIAVGGTGKTPHTEYLIKLLHDEFQVAVLSRGYKRHTKGFVLSTAESDARSIGDEPYQIQSKFSDIRVAVDEDRCHGIERLLTLKEPPVEVILLDDAFQHRYVKAGLNILLTDYHRLFCDDTLMPAGRLRESAQGKNRAQIVIVTKCPPDIKPIDYNIITKRLNLFPYQQLYFSSFRYGNLRAVFPDCATVQERKLSSLQTEEQILLITGIASPDTIIRELEIHTRNIDLLAFSDHHNFSQRDLAQIKERFGKLRKGQRLIVTTEKDATRLICHQELDEGLKPFIYALPIEVEILQNQQDNFNQHIIGYVRENTRNGSLPERKDAHKS.

51 to 58 (AVGGTGKT) is an ATP binding site.

This sequence belongs to the LpxK family.

The catalysed reaction is a lipid A disaccharide + ATP = a lipid IVA + ADP + H(+). The protein operates within glycolipid biosynthesis; lipid IV(A) biosynthesis; lipid IV(A) from (3R)-3-hydroxytetradecanoyl-[acyl-carrier-protein] and UDP-N-acetyl-alpha-D-glucosamine: step 6/6. Functionally, transfers the gamma-phosphate of ATP to the 4'-position of a tetraacyldisaccharide 1-phosphate intermediate (termed DS-1-P) to form tetraacyldisaccharide 1,4'-bis-phosphate (lipid IVA). In Bacteroides fragilis (strain YCH46), this protein is Tetraacyldisaccharide 4'-kinase.